We begin with the raw amino-acid sequence, 148 residues long: Phosphoribosyl-AMP cyclohydrolase (148 aa).

Residue D91 participates in Mg(2+) binding. C92 contacts Zn(2+). The Mg(2+) site is built by D93 and D95. Zn(2+)-binding residues include C109 and C116.

The protein belongs to the PRA-CH family. In terms of assembly, homodimer. Mg(2+) serves as cofactor. Requires Zn(2+) as cofactor.

Its subcellular location is the cytoplasm. The catalysed reaction is 1-(5-phospho-beta-D-ribosyl)-5'-AMP + H2O = 1-(5-phospho-beta-D-ribosyl)-5-[(5-phospho-beta-D-ribosylamino)methylideneamino]imidazole-4-carboxamide. Its pathway is amino-acid biosynthesis; L-histidine biosynthesis; L-histidine from 5-phospho-alpha-D-ribose 1-diphosphate: step 3/9. Functionally, catalyzes the hydrolysis of the adenine ring of phosphoribosyl-AMP. The sequence is that of Phosphoribosyl-AMP cyclohydrolase from Rhodopseudomonas palustris (strain HaA2).